The sequence spans 276 residues: Dermonecrotic toxin LlSicTox-alphaIV2i (276 aa).

The active site involves histidine 5. Residues glutamate 25 and aspartate 27 each contribute to the Mg(2+) site. The active-site Nucleophile is the histidine 41. 2 disulfides stabilise this stretch: cysteine 45–cysteine 51 and cysteine 47–cysteine 193. Aspartate 85 provides a ligand contact to Mg(2+).

Belongs to the arthropod phospholipase D family. Class II subfamily. Requires Mg(2+) as cofactor. Expressed by the venom gland.

It is found in the secreted. It catalyses the reaction an N-(acyl)-sphingosylphosphocholine = an N-(acyl)-sphingosyl-1,3-cyclic phosphate + choline. It carries out the reaction an N-(acyl)-sphingosylphosphoethanolamine = an N-(acyl)-sphingosyl-1,3-cyclic phosphate + ethanolamine. The catalysed reaction is a 1-acyl-sn-glycero-3-phosphocholine = a 1-acyl-sn-glycero-2,3-cyclic phosphate + choline. The enzyme catalyses a 1-acyl-sn-glycero-3-phosphoethanolamine = a 1-acyl-sn-glycero-2,3-cyclic phosphate + ethanolamine. Its function is as follows. Dermonecrotic toxins cleave the phosphodiester linkage between the phosphate and headgroup of certain phospholipids (sphingolipid and lysolipid substrates), forming an alcohol (often choline) and a cyclic phosphate. This toxin acts on sphingomyelin (SM). It may also act on ceramide phosphoethanolamine (CPE), lysophosphatidylcholine (LPC) and lysophosphatidylethanolamine (LPE), but not on lysophosphatidylserine (LPS), and lysophosphatidylglycerol (LPG). It acts by transphosphatidylation, releasing exclusively cyclic phosphate products as second products. Induces dermonecrosis, hemolysis, increased vascular permeability, edema, inflammatory response, and platelet aggregation. In Loxosceles laeta (South American recluse spider), this protein is Dermonecrotic toxin LlSicTox-alphaIV2i.